Here is a 357-residue protein sequence, read N- to C-terminus: Eukaryotic translation initiation factor 3 subunit F (357 aa).

In terms of domain architecture, MPN spans 30-169; the sequence is VHIQPQAVFS…TKAYISAPVA (140 aa). Positions 309–357 are disordered; sequence VGGDKEGGEKGKDGEDGGRGGRGGKRGGGGRGGHRGEPREPREPREPAE. Basic and acidic residues-rich tracts occupy residues 311–327 and 342–357; these read GDKE…DGGR and HRGE…EPAE.

It belongs to the eIF-3 subunit F family. In terms of assembly, component of the eukaryotic translation initiation factor 3 (eIF-3) complex.

Its subcellular location is the cytoplasm. Component of the eukaryotic translation initiation factor 3 (eIF-3) complex, which is involved in protein synthesis of a specialized repertoire of mRNAs and, together with other initiation factors, stimulates binding of mRNA and methionyl-tRNAi to the 40S ribosome. The eIF-3 complex specifically targets and initiates translation of a subset of mRNAs involved in cell proliferation. In Chaetomium globosum (strain ATCC 6205 / CBS 148.51 / DSM 1962 / NBRC 6347 / NRRL 1970) (Soil fungus), this protein is Eukaryotic translation initiation factor 3 subunit F.